Consider the following 283-residue polypeptide: Protein boule-like (283 aa).

The interval 1-25 (MQTDSLSPSPNPVSPVPLNNPTSAP) is disordered. The 78-residue stretch at 33 to 110 (NRIFVGGIDF…KKLNIGPAIR (78 aa)) folds into the RRM domain. The DAZ domain occupies 160–184 (PSRSVCSSPVMVAQPIYQQPAYHYQ).

It belongs to the RRM DAZ family. Interacts with DAZ1 and DAZL.

It localises to the cytoplasm. Functionally, probable RNA-binding protein, which may be required during spermatogenesis. May act by binding to the 3'-UTR of mRNAs and regulating their translation. The chain is Protein boule-like (BOLL) from Macaca fascicularis (Crab-eating macaque).